Here is a 689-residue protein sequence, read N- to C-terminus: Transcription termination factor Rho (689 aa).

Residues 1 to 20 (MPRTPKNQNLEQNTQTQSLT) show a composition bias toward polar residues. Disordered regions lie at residues 1 to 90 (MPRT…KQPV) and 151 to 213 (AQAQ…NRNN). The segment covering 52–65 (PKRRGRKPNPKTKA) has biased composition (basic residues). Low complexity-rich tracts occupy residues 170–183 (NAQQQGEAQAQNGE) and 191–213 (NNQNGKFNKFNKNNKFNKNNRNN). Positions 287-362 (IIYTEGVLEV…RRIDRVNFEE (76 aa)) constitute a Rho RNA-BD domain. ATP is bound by residues 405–410 (GKGQRS), 417–422 (RTGKTV), and arginine 448.

This sequence belongs to the Rho family. As to quaternary structure, homohexamer. The homohexamer assembles into an open ring structure.

Its function is as follows. Facilitates transcription termination by a mechanism that involves Rho binding to the nascent RNA, activation of Rho's RNA-dependent ATPase activity, and release of the mRNA from the DNA template. In Fibrobacter succinogenes (strain ATCC 19169 / S85), this protein is Transcription termination factor Rho.